The sequence spans 181 residues: Transmembrane protein 47 (181 aa).

Ala2 is subject to N-acetylalanine. The next 4 membrane-spanning stretches (helical) occupy residues 21–41, 83–103, 115–135, and 152–172; these read LVGLVCIFLALCLDLGAVLSP, ALLLGGAAIILIAFLVGLISI, VAVMLFAAVVLQVCSLVLYPI, and GYGLAWGATIFSFGGAILYCL.

The protein belongs to the TMEM47 family. As to quaternary structure, interacts with CTNNB1, CTNNA1, PRKCI, PARD6B. Interacts with FYB1. As to expression, expressed in podocytes (at protein level).

It localises to the membrane. The protein localises to the cell junction. The protein resides in the adherens junction. Its function is as follows. Regulates cell junction organization in epithelial cells. May play a role in the transition from adherens junction to tight junction assembly. May regulate F-actin polymerization required for tight junctional localization dynamics and affect the junctional localization of PARD6B. During podocyte differentiation may negatively regulate activity of FYN and subsequently the abundance of nephrin. This chain is Transmembrane protein 47 (Tmem47), found in Mus musculus (Mouse).